Reading from the N-terminus, the 790-residue chain is Penicillin-binding protein 1A (790 aa).

The Cytoplasmic segment spans residues 1 to 20 (MANVRKRRKKKNEHKALRLT). Residues 21–41 (FITLLMVFLFSCVAAAGVGLA) traverse the membrane as a helical; Signal-anchor for type II membrane protein segment. Residues 42 to 790 (MIKAAPPLDV…RKRKMIKPQI (749 aa)) lie on the Extracellular side of the membrane. The transglycosylase stretch occupies residues 61-230 (SVIYDDKNKL…PQSPSTFYNA (170 aa)). Glutamate 100 serves as the catalytic Proton donor; for transglycosylase activity. The segment at 363 to 656 (ASVSIVDYKT…AALIWKLIMG (294 aa)) is transpeptidase. Serine 402 functions as the Acyl-ester intermediate; for transpeptidase activity in the catalytic mechanism. The tract at residues 720-790 (NKDKDDDDDD…RKRKMIKPQI (71 aa)) is disordered. The span at 724-740 (DDDDDDKDKDKEDEEEN) shows a compositional bias: acidic residues. A compositionally biased stretch (basic and acidic residues) spans 741–779 (KDEKNEDKKEAKDNTKNKDKDKKKDNDRKIDMDKKPDSS). Over residues 780–790 (KRKRKMIKPQI) the composition is skewed to basic residues.

This sequence in the N-terminal section; belongs to the glycosyltransferase 51 family. It in the C-terminal section; belongs to the transpeptidase family.

Its subcellular location is the cell membrane. The enzyme catalyses [GlcNAc-(1-&gt;4)-Mur2Ac(oyl-L-Ala-gamma-D-Glu-L-Lys-D-Ala-D-Ala)](n)-di-trans,octa-cis-undecaprenyl diphosphate + beta-D-GlcNAc-(1-&gt;4)-Mur2Ac(oyl-L-Ala-gamma-D-Glu-L-Lys-D-Ala-D-Ala)-di-trans,octa-cis-undecaprenyl diphosphate = [GlcNAc-(1-&gt;4)-Mur2Ac(oyl-L-Ala-gamma-D-Glu-L-Lys-D-Ala-D-Ala)](n+1)-di-trans,octa-cis-undecaprenyl diphosphate + di-trans,octa-cis-undecaprenyl diphosphate + H(+). It catalyses the reaction Preferential cleavage: (Ac)2-L-Lys-D-Ala-|-D-Ala. Also transpeptidation of peptidyl-alanyl moieties that are N-acyl substituents of D-alanine.. The protein operates within cell wall biogenesis; peptidoglycan biosynthesis. Its function is as follows. Cell wall formation. Synthesis of cross-linked peptidoglycan from the lipid intermediates. The enzyme has a penicillin-insensitive transglycosylase N-terminal domain (formation of linear glycan strands) and a penicillin-sensitive transpeptidase C-terminal domain (cross-linking of the peptide subunits). In Clostridium tetani (strain Massachusetts / E88), this protein is Penicillin-binding protein 1A (pbpA).